Reading from the N-terminus, the 804-residue chain is Protein-lysine N-methyltransferase SMYD4 (804 aa).

112 to 114 (RSA) contacts S-adenosyl-L-methionine. One can recognise an SET domain in the interval 233–574 (SSVGLCIDPL…KGQEILHCYG (342 aa)). Residues C296, C299, C309, C312, C318, C322, H331, and C335 each coordinate Zn(2+). The MYND-type zinc finger occupies 296 to 335 (CHRCLKHTLATVPCDGCSYAKYCSQECLQQAWELYHRTEC). S-adenosyl-L-methionine-binding positions include N427, 539–540 (NH), Y573, and F595.

The protein belongs to the class V-like SAM-binding methyltransferase superfamily. Interacts (via MYND-type zinc finger) with HDAC1.

It localises to the nucleus. The protein localises to the cytoplasm. The catalysed reaction is L-lysyl-[protein] + S-adenosyl-L-methionine = N(6)-methyl-L-lysyl-[protein] + S-adenosyl-L-homocysteine + H(+). Protein-lysine N-methyltransferase. Monomethylates PRMT5, modulating its transcriptional activity. May also act as a histone methyltransferase. Plays a critical role in cardiac development. Acts as a key epigenetic regulator of gene expression during cardiac development via its dual activities as a methyltransferase and negative regulator of HDAC1. In Pongo abelii (Sumatran orangutan), this protein is Protein-lysine N-methyltransferase SMYD4 (SMYD4).